The following is a 412-amino-acid chain: Sexual development regulator umv3 (412 aa).

Residues 1-197 are disordered; sequence MSAQDDIDTG…PPLLSDLPRH (197 aa). Polar residues-rich tracts occupy residues 73–93 and 149–170; these read RANT…SASS and RQSA…PGST. Basic and acidic residues predominate over residues 171–181; it reads ENERVRMHDQR. Residues 195-388 enclose the Velvet domain; sequence PRHSTDNKTY…ARQGIQVPVR (194 aa).

The protein belongs to the velvet family. VelC subfamily.

Its subcellular location is the nucleus. Its function is as follows. Velvet-domain-containing protein not required for disease or sexual development on seedlings. This Mycosarcoma maydis (Corn smut fungus) protein is Sexual development regulator umv3.